Reading from the N-terminus, the 513-residue chain is ATP synthase subunit alpha (513 aa).

169 to 176 (GDRQTGKT) contacts ATP.

Belongs to the ATPase alpha/beta chains family. As to quaternary structure, F-type ATPases have 2 components, CF(1) - the catalytic core - and CF(0) - the membrane proton channel. CF(1) has five subunits: alpha(3), beta(3), gamma(1), delta(1), epsilon(1). CF(0) has three main subunits: a(1), b(2) and c(9-12). The alpha and beta chains form an alternating ring which encloses part of the gamma chain. CF(1) is attached to CF(0) by a central stalk formed by the gamma and epsilon chains, while a peripheral stalk is formed by the delta and b chains.

It localises to the cell inner membrane. It catalyses the reaction ATP + H2O + 4 H(+)(in) = ADP + phosphate + 5 H(+)(out). Produces ATP from ADP in the presence of a proton gradient across the membrane. The alpha chain is a regulatory subunit. This is ATP synthase subunit alpha from Shewanella denitrificans (strain OS217 / ATCC BAA-1090 / DSM 15013).